Consider the following 355-residue polypeptide: Protein RecA (355 aa).

67–74 contacts ATP; the sequence is GPESSGKT.

The protein belongs to the RecA family.

Its subcellular location is the cytoplasm. Functionally, can catalyze the hydrolysis of ATP in the presence of single-stranded DNA, the ATP-dependent uptake of single-stranded DNA by duplex DNA, and the ATP-dependent hybridization of homologous single-stranded DNAs. It interacts with LexA causing its activation and leading to its autocatalytic cleavage. The protein is Protein RecA of Proteus mirabilis (strain HI4320).